We begin with the raw amino-acid sequence, 119 residues long: Fluoride-specific ion channel FluC (119 aa).

4 consecutive transmembrane segments (helical) span residues 5–25, 30–50, 59–79, and 97–117; these read IIPL…LNLA, IPPA…IGIF, WKLL…GFSL, and IFLH…IGAA. Na(+) contacts are provided by Gly69 and Thr72.

Belongs to the fluoride channel Fluc/FEX (TC 1.A.43) family.

Its subcellular location is the cell inner membrane. It catalyses the reaction fluoride(in) = fluoride(out). Its activity is regulated as follows. Na(+) is not transported, but it plays an essential structural role and its presence is essential for fluoride channel function. Its function is as follows. Fluoride-specific ion channel. Important for reducing fluoride concentration in the cell, thus reducing its toxicity. In Neisseria meningitidis serogroup B (strain ATCC BAA-335 / MC58), this protein is Fluoride-specific ion channel FluC.